A 581-amino-acid chain; its full sequence is uncharacterized protein (581 aa).

This is an uncharacterized protein from Acanthamoeba polyphaga mimivirus (APMV).